We begin with the raw amino-acid sequence, 256 residues long: C-8 sterol isomerase (256 aa).

The segment at 1 to 31 (MPPKKQSSSGGNKPSGSGSSSGRSSSGSSCR) is disordered. Positions 7 to 30 (SSSGGNKPSGSGSSSGRSSSGSSC) are enriched in low complexity. The chain crosses the membrane as a helical span at residues 40–60 (IGGWLKFFAILFALVAPIAYV).

Belongs to the ERG2 family.

It localises to the endoplasmic reticulum membrane. Its pathway is steroid metabolism; ergosterol biosynthesis; ergosterol from zymosterol: step 2/5. Its function is as follows. Catalyzes the reaction which results in unsaturation at C-7 in the B ring of sterols. The sequence is that of C-8 sterol isomerase (erg-1) from Neurospora crassa (strain ATCC 24698 / 74-OR23-1A / CBS 708.71 / DSM 1257 / FGSC 987).